The following is a 71-amino-acid chain: Small ribosomal subunit protein bS18 (71 aa).

This sequence belongs to the bacterial ribosomal protein bS18 family. Part of the 30S ribosomal subunit. Forms a tight heterodimer with protein bS6.

Binds as a heterodimer with protein bS6 to the central domain of the 16S rRNA, where it helps stabilize the platform of the 30S subunit. The sequence is that of Small ribosomal subunit protein bS18 from Thermosynechococcus vestitus (strain NIES-2133 / IAM M-273 / BP-1).